A 191-amino-acid polypeptide reads, in one-letter code: Thymidine kinase (191 aa).

Residues 9–16 (GSMNSGKT) and 85–88 (DESQ) contribute to the ATP site. The active-site Proton acceptor is Glu-86. Zn(2+) contacts are provided by Cys-143, Cys-146, Cys-181, and Cys-184.

It belongs to the thymidine kinase family. As to quaternary structure, homotetramer.

The protein resides in the cytoplasm. It catalyses the reaction thymidine + ATP = dTMP + ADP + H(+). This chain is Thymidine kinase, found in Listeria monocytogenes serovar 1/2a (strain ATCC BAA-679 / EGD-e).